Reading from the N-terminus, the 335-residue chain is Ornithine carbamoyltransferase (335 aa).

Carbamoyl phosphate contacts are provided by residues 56-59, Gln-83, Arg-107, and 134-137; these read STRT and HPTQ. Residues Asn-168, Asp-232, and 236–237 each bind L-ornithine; that span reads SM. Carbamoyl phosphate-binding positions include 274–275 and Arg-320; that span reads CL.

This sequence belongs to the aspartate/ornithine carbamoyltransferase superfamily. OTCase family.

The protein resides in the cytoplasm. It catalyses the reaction carbamoyl phosphate + L-ornithine = L-citrulline + phosphate + H(+). The protein operates within amino-acid biosynthesis; L-arginine biosynthesis; L-arginine from L-ornithine and carbamoyl phosphate: step 1/3. Reversibly catalyzes the transfer of the carbamoyl group from carbamoyl phosphate (CP) to the N(epsilon) atom of ornithine (ORN) to produce L-citrulline. The polypeptide is Ornithine carbamoyltransferase (Pectobacterium atrosepticum (strain SCRI 1043 / ATCC BAA-672) (Erwinia carotovora subsp. atroseptica)).